We begin with the raw amino-acid sequence, 77 residues long: Dermatoxin-B1 (77 aa).

The signal sequence occupies residues 1-22; it reads MAFLKKSLFLVLFLGLVPLSLC. The propeptide occupies 23–42; the sequence is ESEKREGENEEEQEDDQSEE. Residues 24-45 are disordered; it reads SEKREGENEEEQEDDQSEEKRS. Positions 30-40 are enriched in acidic residues; the sequence is ENEEEQEDDQS. Gln76 carries the post-translational modification Glutamine amide.

Belongs to the frog skin active peptide (FSAP) family. Dermatoxin subfamily. As to expression, highest expression in skin and to a lesser extent in brain and intestine.

It localises to the secreted. Its subcellular location is the target cell membrane. Possesses a potent antimicrobial activity against Gram-positive bacteria B.megaterium, C.glutamicum and S.aureus and mollicutes A.laidlawii and S.melliferum. Less active against Gram-negative bacteria B.cepacia, P.aeruginosa, S.typhimurium and S.meliloti. Probably acts by disturbing membrane functions with its amphipathic structure. In Phyllomedusa bicolor (Two-colored leaf frog), this protein is Dermatoxin-B1.